We begin with the raw amino-acid sequence, 121 residues long: MMLPQWLLLLFLLFFFLFLLTRGSLSPTKYNLLELKESCIRNQDCETGCCQRAPDNCESHCAEKGSEGSLCQTQVFFGQYRACPCLRNLTCIYSKNEKWLSIAYGRCQKIGRQKLAKKMFF.

Positions 1–23 are cleaved as a signal peptide; sequence MMLPQWLLLLFLLFFFLFLLTRG. 5 cysteine pairs are disulfide-bonded: Cys39/Cys50, Cys45/Cys61, Cys49/Cys83, Cys71/Cys91, and Cys85/Cys107.

This sequence belongs to the colipase family. As to expression, exclusively expressed in epididymis, in the corpus region.

The protein localises to the secreted. This Homo sapiens (Human) protein is Colipase-like protein 1 (CLPSL1).